Here is a 231-residue protein sequence, read N- to C-terminus: Large ribosomal subunit protein uL1 (231 aa).

This sequence belongs to the universal ribosomal protein uL1 family. Part of the 50S ribosomal subunit.

Its function is as follows. Binds directly to 23S rRNA. The L1 stalk is quite mobile in the ribosome, and is involved in E site tRNA release. Functionally, protein L1 is also a translational repressor protein, it controls the translation of the L11 operon by binding to its mRNA. The sequence is that of Large ribosomal subunit protein uL1 from Carboxydothermus hydrogenoformans (strain ATCC BAA-161 / DSM 6008 / Z-2901).